Here is a 66-residue protein sequence, read N- to C-terminus: Cold shock protein CspB (66 aa).

In terms of domain architecture, CSD spans 4–63; that stretch reads GKVKWFNNEKGYGFIEVEGGSDVFVHFTAIQGEGFKTLEEGQEVSFEIVQGNRGPQAANV.

As to quaternary structure, homodimer.

It localises to the cytoplasm. In terms of biological role, affects cell viability at low temperatures. This Bacillus caldolyticus protein is Cold shock protein CspB (cspB).